Consider the following 293-residue polypeptide: Ribosomal protein L11 methyltransferase (293 aa).

S-adenosyl-L-methionine-binding residues include Thr-145, Gly-166, Asp-188, and Asn-230.

The protein belongs to the methyltransferase superfamily. PrmA family.

Its subcellular location is the cytoplasm. The catalysed reaction is L-lysyl-[protein] + 3 S-adenosyl-L-methionine = N(6),N(6),N(6)-trimethyl-L-lysyl-[protein] + 3 S-adenosyl-L-homocysteine + 3 H(+). Methylates ribosomal protein L11. This chain is Ribosomal protein L11 methyltransferase, found in Escherichia coli (strain 55989 / EAEC).